Here is a 248-residue protein sequence, read N- to C-terminus: 4-hydroxy-tetrahydrodipicolinate reductase (248 aa).

NAD(+) contacts are provided by residues 9–14 (GAQGRV), 77–79 (GTT), and 104–107 (APNF). Histidine 134 serves as the catalytic Proton donor/acceptor. Histidine 135 lines the (S)-2,3,4,5-tetrahydrodipicolinate pocket. The active-site Proton donor is lysine 138. Residue 144–145 (GT) participates in (S)-2,3,4,5-tetrahydrodipicolinate binding. The interval 157-176 (RREAGMPTQPDATEQSLDGA) is disordered.

The protein belongs to the DapB family.

It localises to the cytoplasm. The catalysed reaction is (S)-2,3,4,5-tetrahydrodipicolinate + NAD(+) + H2O = (2S,4S)-4-hydroxy-2,3,4,5-tetrahydrodipicolinate + NADH + H(+). It catalyses the reaction (S)-2,3,4,5-tetrahydrodipicolinate + NADP(+) + H2O = (2S,4S)-4-hydroxy-2,3,4,5-tetrahydrodipicolinate + NADPH + H(+). The protein operates within amino-acid biosynthesis; L-lysine biosynthesis via DAP pathway; (S)-tetrahydrodipicolinate from L-aspartate: step 4/4. Its function is as follows. Catalyzes the conversion of 4-hydroxy-tetrahydrodipicolinate (HTPA) to tetrahydrodipicolinate. In Corynebacterium diphtheriae (strain ATCC 700971 / NCTC 13129 / Biotype gravis), this protein is 4-hydroxy-tetrahydrodipicolinate reductase.